We begin with the raw amino-acid sequence, 417 residues long: GPI mannosyltransferase 2 (417 aa).

9 helical membrane-spanning segments follow: residues 10-30, 104-124, 142-162, 167-187, 206-226, 239-259, 312-332, 344-364, and 394-414; these read FLIINVTFFAVKLLQFGLVWL, IVLKAVSFNLLLHYLSTWIVY, LALTTSVLFILSSAAGFLISV, IAFTFSLLGMLFRQWSISFDV, FCFAFAFLNRSNCLLLGLFYV, ITSIFYPILSGTILFGVFVYF, IPNFLFGLPNIVITWNAITYF, YIWIARIFLFIMVFLANVQII, and YYVMWLLIWIPTQTALFACFL.

It belongs to the PIGV family.

It localises to the endoplasmic reticulum membrane. It functions in the pathway glycolipid biosynthesis; glycosylphosphatidylinositol-anchor biosynthesis. Functionally, mannosyltransferase involved in glycosylphosphatidylinositol-anchor biosynthesis. Transfers the second mannose to the glycosylphosphatidylinositol during GPI precursor assembly. The protein is GPI mannosyltransferase 2 (GPI18) of Kluyveromyces lactis (strain ATCC 8585 / CBS 2359 / DSM 70799 / NBRC 1267 / NRRL Y-1140 / WM37) (Yeast).